Reading from the N-terminus, the 555-residue chain is Urocanate hydratase (555 aa).

Residues 52-53 (GG), Gln-130, 176-178 (GMG), Glu-196, Arg-201, 242-243 (NA), 263-267 (QTSAH), 273-274 (YL), and Tyr-322 each bind NAD(+). Cys-410 is a catalytic residue. Gly-492 lines the NAD(+) pocket.

The protein belongs to the urocanase family. NAD(+) is required as a cofactor.

It localises to the cytoplasm. The catalysed reaction is 4-imidazolone-5-propanoate = trans-urocanate + H2O. It functions in the pathway amino-acid degradation; L-histidine degradation into L-glutamate; N-formimidoyl-L-glutamate from L-histidine: step 2/3. Its function is as follows. Catalyzes the conversion of urocanate to 4-imidazolone-5-propionate. The polypeptide is Urocanate hydratase (Shewanella baltica (strain OS155 / ATCC BAA-1091)).